The primary structure comprises 410 residues: Multifunctional CCA protein (410 aa).

ATP contacts are provided by glycine 8 and arginine 11. Positions 8 and 11 each coordinate CTP. Aspartate 21 and aspartate 23 together coordinate Mg(2+). Positions 91, 137, and 140 each coordinate ATP. 3 residues coordinate CTP: arginine 91, arginine 137, and arginine 140. An HD domain is found at 225–326 (SGIHTLMTLQ…LNVLKKTDAF (102 aa)).

This sequence belongs to the tRNA nucleotidyltransferase/poly(A) polymerase family. Bacterial CCA-adding enzyme type 1 subfamily. Monomer. Can also form homodimers and oligomers. Requires Mg(2+) as cofactor. The cofactor is Ni(2+).

The enzyme catalyses a tRNA precursor + 2 CTP + ATP = a tRNA with a 3' CCA end + 3 diphosphate. The catalysed reaction is a tRNA with a 3' CCA end + 2 CTP + ATP = a tRNA with a 3' CCACCA end + 3 diphosphate. In terms of biological role, catalyzes the addition and repair of the essential 3'-terminal CCA sequence in tRNAs without using a nucleic acid template. Adds these three nucleotides in the order of C, C, and A to the tRNA nucleotide-73, using CTP and ATP as substrates and producing inorganic pyrophosphate. tRNA 3'-terminal CCA addition is required both for tRNA processing and repair. Also involved in tRNA surveillance by mediating tandem CCA addition to generate a CCACCA at the 3' terminus of unstable tRNAs. While stable tRNAs receive only 3'-terminal CCA, unstable tRNAs are marked with CCACCA and rapidly degraded. The chain is Multifunctional CCA protein from Neisseria gonorrhoeae (strain ATCC 700825 / FA 1090).